We begin with the raw amino-acid sequence, 262 residues long: Flap endonuclease Xni (262 aa).

Residue aspartate 105 participates in Mg(2+) binding. Residues 164-251 (SQFLDLMALA…NINLKDFRAN (88 aa)) enclose the 5'-3' exonuclease domain. K(+) contacts are provided by leucine 172, alanine 173, proline 181, isoleucine 183, and isoleucine 186. Residues 185 to 190 (GIGPKS) form an interaction with DNA region.

Belongs to the Xni family. The cofactor is Mg(2+). It depends on K(+) as a cofactor.

Its function is as follows. Has flap endonuclease activity. During DNA replication, flap endonucleases cleave the 5'-overhanging flap structure that is generated by displacement synthesis when DNA polymerase encounters the 5'-end of a downstream Okazaki fragment. The protein is Flap endonuclease Xni of Shewanella putrefaciens (strain CN-32 / ATCC BAA-453).